The sequence spans 110 residues: Waprin-Thr1 (110 aa).

The signal sequence occupies residues 1-20 (MYKKGTILVLAYLLIATAVC). The 47-residue stretch at 22 to 68 (LSYKEGHCPLRNSVSKCIPRCVSDYQCSFNEKCCPNKCGSESCVQAS) folds into the WAP domain. 4 disulfide bridges follow: Cys-29–Cys-55, Cys-38–Cys-59, Cys-42–Cys-54, and Cys-48–Cys-64.

This sequence belongs to the venom waprin family. Cys-rich waprin subfamily. Expressed by the venom gland.

The protein resides in the secreted. Its function is as follows. Antimicrobial peptides with activity against Gram-positive and Gram-negative bacteria as well as fungi. Recognizes carbohydrates in the microbial cell walls, and induces structural damage to them. Also inhibits microbial serine proteases subtilisin A and proteinase K, as well as human and porcine elastases. Carbohydrates that are recognized are LPS, mannan, peptidoglycan, and N-acetl-D-glucosamine. The polypeptide is Waprin-Thr1 (Apis mellifera (Honeybee)).